Here is a 1571-residue protein sequence, read N- to C-terminus: Pentafunctional AROM polypeptide 2 (1571 aa).

Residues 1–380 (MAEPTKISIL…YEPKASVVSN (380 aa)) form a 3-dehydroquinate synthase region. NAD(+) is bound by residues 44 to 46 (DTN), 81 to 84 (ENSK), 112 to 114 (GGV), and aspartate 117. 7-phospho-2-dehydro-3-deoxy-D-arabino-heptonate is bound at residue arginine 128. 137–138 (TT) is a binding site for NAD(+). 7-phospho-2-dehydro-3-deoxy-D-arabino-heptonate contacts are provided by aspartate 144 and lysine 150. Position 159 (lysine 159) interacts with NAD(+). Asparagine 160 contacts 7-phospho-2-dehydro-3-deoxy-D-arabino-heptonate. NAD(+)-binding positions include 177–180 (FIDT) and asparagine 188. Residue glutamate 192 coordinates Zn(2+). 7-phospho-2-dehydro-3-deoxy-D-arabino-heptonate is bound by residues 192–195 (EVIK) and lysine 246. Glutamate 256 serves as the catalytic Proton acceptor; for 3-dehydroquinate synthase activity. 7-phospho-2-dehydro-3-deoxy-D-arabino-heptonate-binding positions include 260-264 (RNLLN) and histidine 267. Zn(2+) is bound at residue histidine 267. The active-site Proton acceptor; for 3-dehydroquinate synthase activity is the histidine 271. Histidine 283 and lysine 352 together coordinate 7-phospho-2-dehydro-3-deoxy-D-arabino-heptonate. Histidine 283 provides a ligand contact to Zn(2+). The interval 393–838 (VIPGVPKNLN…WDALKQKFGV (446 aa)) is EPSP synthase. Cysteine 820 serves as the catalytic For EPSP synthase activity. Residues 859–1051 (NASIIIIGMR…RKKHLSFFVS (193 aa)) form a shikimate kinase region. 866–873 (GMRGAGKT) is a binding site for ATP. The 3-dehydroquinase stretch occupies residues 1052–1273 (LTLPDLRESG…AAPGQLSAAE (222 aa)). Histidine 1175 functions as the Proton acceptor; for 3-dehydroquinate dehydratase activity in the catalytic mechanism. Lysine 1203 (schiff-base intermediate with substrate; for 3-dehydroquinate dehydratase activity) is an active-site residue. A shikimate dehydrogenase region spans residues 1286 to 1571 (AKKFAVLGKP…NAVLGTNETK (286 aa)).

It in the N-terminal section; belongs to the sugar phosphate cyclases superfamily. Dehydroquinate synthase family. This sequence in the 2nd section; belongs to the EPSP synthase family. In the 3rd section; belongs to the shikimate kinase family. The protein in the 4th section; belongs to the type-I 3-dehydroquinase family. It in the C-terminal section; belongs to the shikimate dehydrogenase family. As to quaternary structure, homodimer. Requires Zn(2+) as cofactor.

The protein localises to the cytoplasm. It catalyses the reaction 7-phospho-2-dehydro-3-deoxy-D-arabino-heptonate = 3-dehydroquinate + phosphate. It carries out the reaction 3-dehydroquinate = 3-dehydroshikimate + H2O. The enzyme catalyses shikimate + NADP(+) = 3-dehydroshikimate + NADPH + H(+). The catalysed reaction is shikimate + ATP = 3-phosphoshikimate + ADP + H(+). It catalyses the reaction 3-phosphoshikimate + phosphoenolpyruvate = 5-O-(1-carboxyvinyl)-3-phosphoshikimate + phosphate. Its pathway is metabolic intermediate biosynthesis; chorismate biosynthesis; chorismate from D-erythrose 4-phosphate and phosphoenolpyruvate: step 2/7. It participates in metabolic intermediate biosynthesis; chorismate biosynthesis; chorismate from D-erythrose 4-phosphate and phosphoenolpyruvate: step 3/7. The protein operates within metabolic intermediate biosynthesis; chorismate biosynthesis; chorismate from D-erythrose 4-phosphate and phosphoenolpyruvate: step 4/7. It functions in the pathway metabolic intermediate biosynthesis; chorismate biosynthesis; chorismate from D-erythrose 4-phosphate and phosphoenolpyruvate: step 5/7. Its pathway is metabolic intermediate biosynthesis; chorismate biosynthesis; chorismate from D-erythrose 4-phosphate and phosphoenolpyruvate: step 6/7. In terms of biological role, the AROM polypeptide catalyzes 5 consecutive enzymatic reactions in prechorismate polyaromatic amino acid biosynthesis. This Talaromyces marneffei (strain ATCC 18224 / CBS 334.59 / QM 7333) (Penicillium marneffei) protein is Pentafunctional AROM polypeptide 2.